The sequence spans 154 residues: MRKQVEIFTDGSCLGNPGPGGYGALLRYKQHEKPLSAGYRLTTNNRMELMAAIAALETLTTECDVVLCTDSQYVRQGITSWIHNWKKRGWKTADKKPVKNVDLWQRLDTAIQRHSVRWEWVKGHAGHPENERCDELARAAAGAPTLDDTGYQAE.

Positions Met1–Gly142 constitute an RNase H type-1 domain. Mg(2+) is bound by residues Asp10, Glu48, Asp70, and Asp134.

The protein belongs to the RNase H family. As to quaternary structure, monomer. It depends on Mg(2+) as a cofactor.

The protein resides in the cytoplasm. It carries out the reaction Endonucleolytic cleavage to 5'-phosphomonoester.. Functionally, endonuclease that specifically degrades the RNA of RNA-DNA hybrids. The polypeptide is Ribonuclease H (Pectobacterium carotovorum subsp. carotovorum (strain PC1)).